Reading from the N-terminus, the 1352-residue chain is Spike glycoprotein (1352 aa).

Residues 1–12 (MIRSVLVLMCSL) form the signal peptide. Over 13–1297 (TFIGNLTRGQ…GNYTFYQKWP (1285 aa)) the chain is Extracellular. Residues 22–359 (QSVDMGHNGT…DDLAQLQCSY (338 aa)) enclose the BetaCoV S1-NTD domain. N29, N73, N111, N132, N167, N174, N244, and N250 each carry an N-linked (GlcNAc...) asparagine; by host glycan. A disulfide bond links C193 and C245. Intrachain disulfides connect C347-C357 and C391-C415. The region spanning 389–585 (QECDFTPMLT…GTDTNSVCPM (197 aa)) is the BetaCoV S1-CTD domain. N418 carries an N-linked (GlcNAc...) asparagine; by host glycan. 2 cysteine pairs are disulfide-bonded: C433/C486 and C445/C583. 8 N-linked (GlcNAc...) asparagine; by host glycosylation sites follow: N495, N590, N617, N716, N760, N771, N782, and N867. Fusion peptide regions lie at residues 885-906 (STIE…MQGY) and 904-926 (QGYD…AQYV). C909 and C922 are joined by a disulfide. The segment at 991–1041 (QKIIANKFNQALGAMQTGFTTTNLAFNKVQDAVNANAMALSKLAAELSNTF) is heptad repeat 1. A coiled-coil region spans residues 1020 to 1064 (QDAVNANAMALSKLAAELSNTFGAISSSISDILARLDTVEQEAQI). N-linked (GlcNAc...) asparagine; by host glycosylation is found at N1145, N1172, N1214, N1226, N1242, N1257, N1278, and N1289. The tract at residues 1247 to 1286 (GPNFQEISKINTTLLNLNTELMVLSEVVKQLNESYIDLKE) is heptad repeat 2. A coiled-coil region spans residues 1259–1287 (TLLNLNTELMVLSEVVKQLNESYIDLKEL). Residues 1298-1318 (WYIWLGFIAGLVALALCVFFI) traverse the membrane as a helical segment. Over 1319–1352 (LCCTGCGTSCLGKLKCNRCCDSYDEYEVEKIHVH) the chain is Cytoplasmic. The KxHxx signature appears at 1350–1352 (HVH).

The protein belongs to the betacoronaviruses spike protein family. As to quaternary structure, homotrimer; each monomer consists of a S1 and a S2 subunit. The resulting peplomers protrude from the virus surface as spikes. In terms of processing, specific enzymatic cleavages in vivo yield mature proteins. The precursor is processed into S1 and S2 by host cell furin or another cellular protease to yield the mature S1 and S2 proteins. Additionally, a second cleavage leads to the release of a fusion peptide after viral attachment to host cell receptor. The cytoplasmic Cys-rich domain is palmitoylated. Spike glycoprotein is digested within host endosomes.

The protein localises to the virion membrane. Its subcellular location is the host endoplasmic reticulum-Golgi intermediate compartment membrane. The protein resides in the host cell membrane. In terms of biological role, attaches the virion to the cell membrane by interacting with host receptor, initiating the infection. Mediates fusion of the virion and cellular membranes by acting as a class I viral fusion protein. Under the current model, the protein has at least three conformational states: pre-fusion native state, pre-hairpin intermediate state, and post-fusion hairpin state. During viral and target cell membrane fusion, the coiled coil regions (heptad repeats) assume a trimer-of-hairpins structure, positioning the fusion peptide in close proximity to the C-terminal region of the ectodomain. The formation of this structure appears to drive apposition and subsequent fusion of viral and target cell membranes. Functionally, acts as a viral fusion peptide which is unmasked following S2 cleavage occurring upon virus endocytosis. The polypeptide is Spike glycoprotein (Bat coronavirus HKU5 (BtCoV)).